Reading from the N-terminus, the 244-residue chain is Probable transcriptional regulatory protein CHAB381_1426 (244 aa).

The protein belongs to the TACO1 family.

Its subcellular location is the cytoplasm. This is Probable transcriptional regulatory protein CHAB381_1426 from Campylobacter hominis (strain ATCC BAA-381 / DSM 21671 / CCUG 45161 / LMG 19568 / NCTC 13146 / CH001A).